The chain runs to 551 residues: MKPSPQRTLIKKLLVLLGPLVAVPLLFFGPEYRCLFSIIFLSTYWIGEAFPIGVTSLFPLALYPILQIVPSKQISPVYFKDSIVLFMCTLIMAMAVEATGLHRRIALKLLTKVGAKQPVMLLGFMCITSFISFFVSDTACTALMCPTAVALLMSMSDAVQHLKEDHRKPKPPPDDATVAEKLRIDDMTPQDAGFCKALILACAHASLIGGTAIITSTGPNLVFRENIHKRYPEGQVTMTYLQWMVFAIPPMFVYLLASYIILVCYFMGPSTFARWFERPSKEEAHLKKLIEKNIQTMYEDLGDVSWGEKSVFVFFILLIGSWISRDPGFTPGWGDLLPHRNFISDSVSGVLISCILFVWPKDPFDPIDPMAPILKWTDMKSKFSWSCTLLIGAGYAISEGVDKSGLSRLISCGMKNIFVGMSSLPLQLTVTTIIVIMTEFASNVSTGSIFIPISLGVAESMGVHPLYLALPTTVACSFAFMLPISTPPNAVVYDTKVISMVEMIVCGFLLNIACILITSLNMNTWTYFIFSLNIFPENIVISSENSSYPVC.

10 consecutive transmembrane segments (helical) span residues 9 to 29 (LIKK…LFFG), 34 to 54 (CLFS…PIGV), 82 to 102 (SIVL…TGLH), 119 to 139 (VMLL…SDTA), 194 to 214 (FCKA…TAII), 243 to 263 (WMVF…IILV), 347 to 367 (VSGV…FDPI), 417 to 437 (IFVG…IVIM), 449 to 469 (IFIP…LYLA), and 497 to 517 (VISM…CILI).

This sequence belongs to the SLC13A/DASS transporter (TC 2.A.47) family. NADC subfamily.

Its subcellular location is the membrane. High-affinity sodium-dicarboxylate cotransporter that accepts a range of tricarboxylic acid-cycle intermediates with 4-5 carbon atoms. There is no interaction with monocarboxylates. The polypeptide is Sodium-dependent high-affinity dicarboxylate transporter 2 (nac-2) (Caenorhabditis elegans).